Reading from the N-terminus, the 469-residue chain is Pancreatic lipase-related protein 2 (469 aa).

The N-terminal stretch at 1-17 is a signal peptide; it reads MLPPWTLGLLLLATVRG. A disulfide bridge connects residues C21 and C27. A required for galactolipase activity region spans residues 93–105; that stretch reads IHGFLDKAEDSWP. C109 and C120 are disulfide-bonded. The active-site Nucleophile is the S171. D195 serves as the catalytic Charge relay system. 4 residues coordinate Ca(2+): E206, R209, D211, and D214. C256 and C280 are oxidised to a cystine. The interval 257 to 279 is required for galactolipase activity; that stretch reads KKNVLSTITDIDGIWEGIGGFVS. Residue H282 is the Charge relay system of the active site. 2 disulfides stabilise this stretch: C304–C315 and C318–C323. Residues N353 and N428 are each glycosylated (N-linked (GlcNAc...) asparagine). The 113-residue stretch at 357-469 folds into the PLAT domain; the sequence is WRYKISVTLS…ENVLQSLYPC (113 aa). C453 and C469 are oxidised to a cystine.

This sequence belongs to the AB hydrolase superfamily. Lipase family. In terms of tissue distribution, pancreas.

Its subcellular location is the secreted. The protein resides in the zymogen granule membrane. It is found in the cell projection. The protein localises to the neuron projection. The enzyme catalyses a triacylglycerol + H2O = a diacylglycerol + a fatty acid + H(+). The catalysed reaction is a 1,2-diacyl-3-O-(beta-D-galactosyl)-sn-glycerol + 2 H2O = 3-beta-D-galactosyl-sn-glycerol + 2 a fatty acid + 2 H(+). It carries out the reaction 1,2,3-tri-(9Z-octadecenoyl)-glycerol + H2O = di-(9Z)-octadecenoylglycerol + (9Z)-octadecenoate + H(+). It catalyses the reaction di-(9Z)-octadecenoylglycerol + H2O = (9Z-octadecenoyl)-glycerol + (9Z)-octadecenoate + H(+). The enzyme catalyses (9Z-octadecenoyl)-glycerol + H2O = glycerol + (9Z)-octadecenoate + H(+). The catalysed reaction is 1-(9Z-octadecenoyl)-glycerol + H2O = glycerol + (9Z)-octadecenoate + H(+). It carries out the reaction 1,2,3-tripropanoylglycerol + H2O = dipropanoylglycerol + propanoate + H(+). It catalyses the reaction 1,2,3-tributanoylglycerol + H2O = dibutanoylglycerol + butanoate + H(+). The enzyme catalyses 1,2,3-trioctanoylglycerol + H2O = dioctanoylglycerol + octanoate + H(+). The catalysed reaction is 1,2-didecanoylglycerol + H2O = decanoylglycerol + decanoate + H(+). It carries out the reaction long chain 1,2-diacyl-3-O-beta-D-galactosyl-sn-glycerol + H2O = long chain acyl-3-O-beta-D-galactosyl-sn-glycerol + a fatty acid + H(+). It catalyses the reaction 1,2-dioctanoyl-3-O-beta-D-galactosyl-sn-glycerol + H2O = octanoyl-3-(beta-D-galactosyl)-sn-glycerol + octanoate + H(+). The enzyme catalyses 1,2-didodecanoyl-3-beta-D-galactosyl-sn-glycerol + H2O = dodecanoyl-3-beta-D-galactosyl-sn-glycerol + dodecanoate + H(+). The catalysed reaction is 1-beta-D-galactosyl-2,3-didodecanoyl-sn-glycerol + H2O = 1-beta-D-galactosyl-dodecanoyl-sn-glycerol + dodecanoate + H(+). It carries out the reaction a 1,2-diacyl-3-O-[alpha-D-galactosyl-(1-&gt;6)-beta-D-galactosyl]-sn-glycerol + H2O = acyl-3-O-[alpha-D-galactosyl-(1-&gt;6)-beta-D-galactosyl]-sn-glycerol + a fatty acid + H(+). It catalyses the reaction long chain 1,2-diacyl-3-O-[alpha-D-galactosyl-(1-&gt;6)-beta-D-galactosyl]-sn-glycerol + H2O = long chain acyl-3-O-[alpha-D-galactosyl-(1-&gt;6)-beta-D-galactosyl]-sn-glycerol + a fatty acid + H(+). The enzyme catalyses 1,2-dioctanoyl-3-O-[alpha-D-galactosyl-(1-&gt;6)-beta-D-galactosyl]-sn-glycerol + H2O = octanoyl-3-O-[alpha-D-galactosyl-(1-&gt;6)-beta-D-galactosyl]-sn-glycerol + octanoate + H(+). The catalysed reaction is 1,2-didodecanoyl-3-O-[alpha-D-galactosyl-(1-&gt;6)-beta-D-galactosyl]-sn-glycerol + H2O = dodecanoyl-3-O-[alpha-D-galactosyl-(1-&gt;6)-beta-D-galactosyl]-sn-glycerol + dodecanoate + H(+). It carries out the reaction a 1,2-diacyl-sn-glycero-3-phosphocholine + H2O = a monoacyl-sn-glycero-3-phosphocholine + a fatty acid + H(+). It functions in the pathway glycerolipid metabolism; triacylglycerol degradation. It participates in glycolipid metabolism. With respect to regulation, regulated by CLPS and bile salts levels ranging 1-5 mM in neonates and 2-30 mM in healthy adults. CLPS stimulates milk fat digestion in the presence of 4 mM bile salts. Triacylglycerol lipase activity toward short- and medium-chain triglycerides is inhibited by increasing concentrations of bile salts and weakly reactivated by CLPS. Optimal triacylglycerol lipase activity is reached at bile salts concentrations ranging from 0.1 to 0.5 mM and then decreases at concentrations higher than 1 mM. Lipase activity toward long-chain glycerolipids is stimulated by CLPS in the presence of 4 mM bile salts. Galactolipase activity is inhibited at high concentrations of bile salts. Triacylglycerol lipase activity is inhibited by anti-obesity drug tetrahydrolipstatin. Functionally, lipase that primarily hydrolyzes triglycerides and galactosylglycerides. In neonates, may play a major role in pancreatic digestion of dietary fats such as milk fat globules enriched in long-chain triglycerides. Hydrolyzes short-, medium- and long-chain fatty acyls in triglycerides without apparent positional specificity. Can completely deacylate triacylglycerols. When the liver matures and bile salt synthesis increases, likely functions mainly as a galactolipase and monoacylglycerol lipase. Hydrolyzes monogalactosyldiglycerols (MGDG) and digalactosyldiacylglycerols (DGDG) present in a plant-based diet, releasing long-chain polyunsaturated fatty acids. Hydrolyzes medium- and long-chain fatty acyls in galactolipids. May act together with LIPF to hydrolyze partially digested triglycerides. Hydrolyzes long-chain monoglycerides with high efficiency. In cytotoxic T cells, contributes to perforin-dependent cell lysis, but is unlikely to mediate direct cytotoxicity. Also has low phospholipase activity. In neurons, required for the localization of the phospholipid 1-oleoyl-2-palmitoyl-PC (OPPC) to neurite tips through acyl chain remodeling of membrane phospholipids. The resulting OPPC-rich lipid membrane domain recruits the t-SNARE protein STX4 by selectively interacting with the STX4 transmembrane domain and this promotes surface expression of the dopamine transporter SLC6A3/DAT at neurite tips by facilitating fusion of SLC6A3-containing transport vesicles with the plasma membrane. This Homo sapiens (Human) protein is Pancreatic lipase-related protein 2.